A 296-amino-acid polypeptide reads, in one-letter code: Giardin subunit alpha-2 (296 aa).

Annexin repeat units lie at residues 2–71 (PKLS…MDLF), 73–143 (DRHE…MEKW), 153–223 (GSPD…AHFA), and 226–293 (GMHK…TLWR).

Belongs to the annexin family. Giardin subunit alpha subfamily.

The protein localises to the cytoplasm. It is found in the cytoskeleton. Its function is as follows. Giardins are involved in parasite attachment to the intestinal mucosa and in the cytoskeletal disassembly and reassembly that marks the transition from infectious trophozoite to transmissible cyst. They may interact with other cytoskeletal proteins such as microtubules in the microribbons or crossbridges, to maintain the integrity of the ventral disk. The sequence is that of Giardin subunit alpha-2 from Giardia intestinalis (Giardia lamblia).